The chain runs to 883 residues: Bifunctional heparan sulfate N-deacetylase/N-sulfotransferase 2 (883 aa).

Residues 1–18 (MLQLWKVVRPARQLELHR) are Cytoplasmic-facing. A helical; Signal-anchor for type II membrane protein transmembrane segment spans residues 19–39 (LILLLIAFSLGSMGFLAYYVS). Topologically, residues 40 to 883 (TSPKAKEPLP…REELQHSSLG (844 aa)) are lumenal. The segment at 41–597 (SPKAKEPLPL…KRHKDIWSKE (557 aa)) is heparan sulfate N-deacetylase 2. The segment at 49-81 (PLPLGDCSSGGAAGPGPARPPVPPRPPRPPETA) is disordered. Over residues 65–78 (PARPPVPPRPPRPP) the composition is skewed to pro residues. N-linked (GlcNAc...) asparagine glycosylation is found at Asn233, Asn350, and Asn400. The heparan sulfate N-sulfotransferase 2 stretch occupies residues 598–883 (KTCDRLPKFL…REELQHSSLG (286 aa)). Lys613 acts as the For sulfotransferase activity in catalysis. Position 613-617 (613-617 (KTGTT)) interacts with 3'-phosphoadenylyl sulfate. An N-linked (GlcNAc...) asparagine glycan is attached at Asn666. 3'-phosphoadenylyl sulfate is bound at residue Ser711. 2 N-linked (GlcNAc...) asparagine glycosylation sites follow: Asn726 and Asn802. Cys817 and Cys827 are disulfide-bonded. 832 to 836 (KGRRY) is a binding site for 3'-phosphoadenylyl sulfate.

It belongs to the sulfotransferase 1 family. NDST subfamily. Monomer.

It is found in the golgi apparatus membrane. The enzyme catalyses alpha-D-glucosaminyl-[heparan sulfate](n) + 3'-phosphoadenylyl sulfate = N-sulfo-alpha-D-glucosaminyl-[heparan sulfate](n) + adenosine 3',5'-bisphosphate + 2 H(+). Its pathway is glycan metabolism; heparan sulfate biosynthesis. It participates in glycan metabolism; heparin biosynthesis. Functionally, essential bifunctional enzyme that catalyzes both the N-deacetylation and the N-sulfation of glucosamine (GlcNAc) of the glycosaminoglycan in heparan sulfate. Modifies the GlcNAc-GlcA disaccharide repeating sugar backbone to make N-sulfated heparosan, a prerequisite substrate for later modifications in heparin biosynthesis. Plays a role in determining the extent and pattern of sulfation of heparan sulfate. Required for the exosomal release of SDCBP, CD63 and syndecan. This chain is Bifunctional heparan sulfate N-deacetylase/N-sulfotransferase 2 (NDST2), found in Homo sapiens (Human).